We begin with the raw amino-acid sequence, 297 residues long: Ribosomal RNA small subunit methyltransferase A (297 aa).

The S-adenosyl-L-methionine site is built by asparagine 28, leucine 30, glycine 55, glutamate 76, aspartate 101, and asparagine 126.

It belongs to the class I-like SAM-binding methyltransferase superfamily. rRNA adenine N(6)-methyltransferase family. RsmA subfamily.

It localises to the cytoplasm. It carries out the reaction adenosine(1518)/adenosine(1519) in 16S rRNA + 4 S-adenosyl-L-methionine = N(6)-dimethyladenosine(1518)/N(6)-dimethyladenosine(1519) in 16S rRNA + 4 S-adenosyl-L-homocysteine + 4 H(+). Specifically dimethylates two adjacent adenosines (A1518 and A1519) in the loop of a conserved hairpin near the 3'-end of 16S rRNA in the 30S particle. May play a critical role in biogenesis of 30S subunits. The protein is Ribosomal RNA small subunit methyltransferase A of Latilactobacillus sakei subsp. sakei (strain 23K) (Lactobacillus sakei subsp. sakei).